Consider the following 357-residue polypeptide: Olfactory receptor 2B2 (357 aa).

Over 1–25 the chain is Extracellular; the sequence is MNWVNKSVPQEFILLVFSDQPWLEI. The N-linked (GlcNAc...) asparagine glycan is linked to N5. A helical membrane pass occupies residues 26–49; that stretch reads PPFVMFLFSYILTIFGNLTIILVS. Residues 50-57 are Cytoplasmic-facing; the sequence is HVDFKLHT. A helical transmembrane segment spans residues 58 to 79; the sequence is PMYFFLSNLSLLDLCYTTSTVP. At 80-100 the chain is on the extracellular side; sequence QMLVNICNTRKVISYGGCVAQ. C97 and C189 form a disulfide bridge. Residues 101-120 traverse the membrane as a helical segment; it reads LFIFLALGSTECLLLAVMCF. Residues 121–139 are Cytoplasmic-facing; it reads DRFVAICRPLHYSIIMHQR. Residues 140-158 traverse the membrane as a helical segment; sequence LCFQLAAASWISGFSNSVL. The Extracellular segment spans residues 159 to 195; that stretch reads QSTWTLKMPLCGHKEVDHFFCEVPALLKLSCVDTTAN. The chain crosses the membrane as a helical span at residues 196 to 219; it reads EAELFFISVLFLLIPVTLILISYA. Residues 220 to 236 lie on the Cytoplasmic side of the membrane; the sequence is FIVQAVLRIQSAEGQRK. A helical transmembrane segment spans residues 237-259; it reads AFGTCGSHLIVVSLFYGTAISMY. The Extracellular portion of the chain corresponds to 260 to 272; sequence LQPPSPSSKDRGK. Residues 273–292 traverse the membrane as a helical segment; that stretch reads MVSLFCGIIAPMLNPLIYTL. Over 293–357 the chain is Cytoplasmic; the sequence is RNKEVKEAFK…YCNLPQRKFP (65 aa).

The protein belongs to the G-protein coupled receptor 1 family.

It localises to the cell membrane. Functionally, odorant receptor. The protein is Olfactory receptor 2B2 (OR2B2) of Homo sapiens (Human).